A 543-amino-acid polypeptide reads, in one-letter code: CTP synthase (543 aa).

Positions Met-1–Leu-267 are amidoligase domain. A CTP-binding site is contributed by Ser-15. Ser-15 is a binding site for UTP. Residues Ser-16–Ile-21 and Asp-73 each bind ATP. Mg(2+) contacts are provided by Asp-73 and Glu-141. Residues Asp-148 to Glu-150, Lys-188 to Gln-193, and Lys-224 each bind CTP. UTP is bound by residues Lys-188 to Gln-193 and Lys-224. Positions Lys-292–Asn-543 constitute a Glutamine amidotransferase type-1 domain. Gly-354 contacts L-glutamine. Cys-381 functions as the Nucleophile; for glutamine hydrolysis in the catalytic mechanism. Residues Leu-382–Gln-385, Glu-405, and Arg-473 each bind L-glutamine. Residues His-516 and Glu-518 contribute to the active site.

It belongs to the CTP synthase family. In terms of assembly, homotetramer.

It carries out the reaction UTP + L-glutamine + ATP + H2O = CTP + L-glutamate + ADP + phosphate + 2 H(+). The enzyme catalyses L-glutamine + H2O = L-glutamate + NH4(+). The catalysed reaction is UTP + NH4(+) + ATP = CTP + ADP + phosphate + 2 H(+). It participates in pyrimidine metabolism; CTP biosynthesis via de novo pathway; CTP from UDP: step 2/2. Allosterically activated by GTP, when glutamine is the substrate; GTP has no effect on the reaction when ammonia is the substrate. The allosteric effector GTP functions by stabilizing the protein conformation that binds the tetrahedral intermediate(s) formed during glutamine hydrolysis. Inhibited by the product CTP, via allosteric rather than competitive inhibition. Functionally, catalyzes the ATP-dependent amination of UTP to CTP with either L-glutamine or ammonia as the source of nitrogen. Regulates intracellular CTP levels through interactions with the four ribonucleotide triphosphates. This chain is CTP synthase, found in Campylobacter jejuni subsp. jejuni serotype O:6 (strain 81116 / NCTC 11828).